The primary structure comprises 257 residues: Type III pantothenate kinase (257 aa).

An ATP-binding site is contributed by 5–12 (DIGNTNIK). Residue 107-110 (GSDR) participates in substrate binding. Catalysis depends on aspartate 109, which acts as the Proton acceptor. ATP is bound at residue threonine 133.

This sequence belongs to the type III pantothenate kinase family. Homodimer. NH4(+) serves as cofactor. The cofactor is K(+).

The protein resides in the cytoplasm. It catalyses the reaction (R)-pantothenate + ATP = (R)-4'-phosphopantothenate + ADP + H(+). It functions in the pathway cofactor biosynthesis; coenzyme A biosynthesis; CoA from (R)-pantothenate: step 1/5. In terms of biological role, catalyzes the phosphorylation of pantothenate (Pan), the first step in CoA biosynthesis. In Ehrlichia ruminantium (strain Welgevonden), this protein is Type III pantothenate kinase.